A 217-amino-acid chain; its full sequence is MDIERVNDTTIKFFITYKDIEDRGFDRDEIWYNRERGEELFFEMMNEANDRDEFELDGPLWIQVHALDKGLEIVVTRGQVSDGNVKLEIPVSQDKENTDENIVDLMTGHSSEDDEGIDTDQLEIVIGFNDFEDIISLSHNFFIDDLENELYHFEGRYYLHVLFNDDQYNEDEQDDMLSQMLEYGYETDLSIHRMQEYGKEIIGEYALKHLRGHFPQN.

Belongs to the MecA family. In terms of assembly, homodimer.

Its function is as follows. Enables the recognition and targeting of unfolded and aggregated proteins to the ClpC protease or to other proteins involved in proteolysis. Acts negatively in the development of competence by binding ComK and recruiting it to the ClpCP protease. When overexpressed, inhibits sporulation. Also involved in Spx degradation by ClpC. This is Adapter protein MecA from Alkalihalophilus pseudofirmus (strain ATCC BAA-2126 / JCM 17055 / OF4) (Bacillus pseudofirmus).